The primary structure comprises 199 residues: MNSPLVVGFLACFTLIAAIGAQNAFVLRQGIQREHVLPVVALCTVSDIVLIAAGIAGFGALIGAHPRALNVVKFGGAAFLIGYGLLAARRAWRPVALIPSGATPVRLAEVLVTCAAFTFLNPHVYLDTVVLLGALANEHSDQRWLFGLGAVTASAVWFATLGFGAGRLRGLFTNPGSWRILDGLIAVMMVALGISLTVT.

The next 5 helical transmembrane spans lie at 6–26 (VVGF…NAFV), 42–62 (LCTV…GALI), 68–88 (ALNV…LLAA), 144–164 (WLFG…LGFG), and 178–198 (WRIL…SLTV).

This sequence belongs to the LysE/ArgO transporter (TC 2.A.75) family.

It localises to the cell inner membrane. Its function is as follows. Catalyzes the efflux of L-lysine. This chain is Lysine exporter LysE, found in Mycobacterium bovis (strain ATCC BAA-935 / AF2122/97).